The following is a 353-amino-acid chain: Photosystem II protein D1 (353 aa).

An N-acetylthreonine modification is found at Thr2. Phosphothreonine is present on Thr2. Transmembrane regions (helical) follow at residues 29–46 (YIGW…TATS), 118–133 (HFLL…EWEL), and 142–156 (WIAV…AATA). Residue His118 coordinates chlorophyll a. Tyr126 is a pheophytin a binding site. Positions 170 and 189 each coordinate [CaMn4O5] cluster. A helical membrane pass occupies residues 197–218 (FHMLGVAGVFGGSLFSAMHGSL). His198 contributes to the chlorophyll a binding site. A quinone is bound by residues His215 and 264-265 (SF). Position 215 (His215) interacts with Fe cation. His272 is a Fe cation binding site. The chain crosses the membrane as a helical span at residues 274–288 (FLAAWPVVGIWFTAL). His332, Glu333, Asp342, and Ala344 together coordinate [CaMn4O5] cluster. Positions 345-353 (AIEAPSTNG) are excised as a propeptide.

This sequence belongs to the reaction center PufL/M/PsbA/D family. As to quaternary structure, PSII is composed of 1 copy each of membrane proteins PsbA, PsbB, PsbC, PsbD, PsbE, PsbF, PsbH, PsbI, PsbJ, PsbK, PsbL, PsbM, PsbT, PsbX, PsbY, PsbZ, Psb30/Ycf12, at least 3 peripheral proteins of the oxygen-evolving complex and a large number of cofactors. It forms dimeric complexes. The D1/D2 heterodimer binds P680, chlorophylls that are the primary electron donor of PSII, and subsequent electron acceptors. It shares a non-heme iron and each subunit binds pheophytin, quinone, additional chlorophylls, carotenoids and lipids. D1 provides most of the ligands for the Mn4-Ca-O5 cluster of the oxygen-evolving complex (OEC). There is also a Cl(-1) ion associated with D1 and D2, which is required for oxygen evolution. The PSII complex binds additional chlorophylls, carotenoids and specific lipids. is required as a cofactor. Tyr-161 forms a radical intermediate that is referred to as redox-active TyrZ, YZ or Y-Z. In terms of processing, C-terminally processed by CTPA; processing is essential to allow assembly of the oxygen-evolving complex and thus photosynthetic growth.

Its subcellular location is the plastid. The protein localises to the chloroplast thylakoid membrane. It catalyses the reaction 2 a plastoquinone + 4 hnu + 2 H2O = 2 a plastoquinol + O2. Functionally, photosystem II (PSII) is a light-driven water:plastoquinone oxidoreductase that uses light energy to abstract electrons from H(2)O, generating O(2) and a proton gradient subsequently used for ATP formation. It consists of a core antenna complex that captures photons, and an electron transfer chain that converts photonic excitation into a charge separation. The D1/D2 (PsbA/PsbD) reaction center heterodimer binds P680, the primary electron donor of PSII as well as several subsequent electron acceptors. This Nicotiana debneyi (Debney's tobacco) protein is Photosystem II protein D1.